The sequence spans 232 residues: Thrombin-like enzyme BjussuSP-1 (232 aa).

The Peptidase S1 domain maps to V1–A223. 6 disulfide bridges follow: C7–C138, C25–C41, C73–C230, C117–C184, C149–C163, and C174–C199. H40 serves as the catalytic Charge relay system. Residue N77 is glycosylated (N-linked (GlcNAc...) asparagine). D85 (charge relay system) is an active-site residue. A glycan (N-linked (GlcNAc...) asparagine) is linked at N129. S178 acts as the Charge relay system in catalysis.

Belongs to the peptidase S1 family. Snake venom subfamily. In terms of assembly, monomer. Post-translationally, N-glycosylated. Contains sialic acid residues. Deglycosylation reduces in 50% the formation of fibrin clot. As to expression, expressed by the venom gland.

It is found in the secreted. With respect to regulation, inhibited by leupeptin, heparin, and 1.10-phenantroline. Its function is as follows. Thrombin-like enzyme that shows clotting activity upon human plasma. Shows specific fibrinogenolytic activity for Aalpha chain (FGA). Hydrolyzes fibrin, BAPNA and TAME, as well as chromogenic artificial substrates of the blood coagulation cascasde: S-27654 for factor X (F10), S-2302 for kallikrein (KLK), factor XIa (F11), and XIIa (F12), and S-2266 for kallikrein and factor XIa (F11). Subcutaneous injection into mice induces a mild edema. Intravenous and intramuscular injection reduce plasma fibrinogen concentration and increase the levels of fibrin(ogen) degradation products. Intramuscular injection also promotes an increase in the expression of proMMP-9, but is unable to activate it. The polypeptide is Thrombin-like enzyme BjussuSP-1 (Bothrops jararacussu (Jararacussu)).